The primary structure comprises 509 residues: Pancreatic secretory granule membrane major glycoprotein GP2 (509 aa).

An N-terminal signal peptide occupies residues 1-21 (MVGSYVLWLALASCILTLASP). Residues 36 to 56 (DPCQNYTLLDEPSRSTENTEG) form a D10C region. 10 disulfides stabilise this stretch: Cys-38–Cys-132, Cys-60–Cys-147, Cys-82–Cys-120, Cys-88–Cys-152, Cys-113–Cys-121, Cys-162–Cys-172, Cys-166–Cys-181, Cys-183–Cys-213, Cys-201–Cys-292, and Cys-233–Cys-256. 3 N-linked (GlcNAc...) asparagine glycosylation sites follow: Asn-40, Asn-97, and Asn-109. One can recognise an EGF-like domain in the interval 158 to 202 (ATDKCKNLCRPEEACSFLNGTWDCFCRSDLNSSDVHSLQPRLNCG). 3 N-linked (GlcNAc...) asparagine glycosylation sites follow: Asn-176, Asn-188, and Asn-232. Residues 200-293 (NCGAKEIQVS…TILNINFQCA (94 aa)) form a ZP-N region. The ZP domain occupies 200-456 (NCGAKEIQVS…PCCSRSQQRS (257 aa)). 2 N-linked (GlcNAc...) asparagine glycosylation sites follow: Asn-263 and Asn-314. The flexible ZP-N/ZP-C linker stretch occupies residues 294 to 317 (YPLDMKVSLQTALHPIVSSLNISV). The internal hydrophobic patch (IHP) stretch occupies residues 318-329 (DGEGEFTVRMAL). The segment at 318 to 456 (DGEGEFTVRM…PCCSRSQQRS (139 aa)) is ZP-C. Disulfide bonds link Cys-373–Cys-433, Cys-394–Cys-449, and Cys-438–Cys-445. Residues 463-471 (PARVLDLGP) are external hydrophobic patch (EHP). A lipid anchor (GPI-anchor amidated aspartate) is attached at Asp-484. Positions 485–509 (GTPSTAGFLLAWPMLLLPILLAELF) are cleaved as a propeptide — removed in mature form.

In terms of assembly, interacts with SYCN. Interacts with bacterial adhesin fimH. In terms of processing, N-glycosylated. In terms of tissue distribution, expressed in pancreas.

Its subcellular location is the zymogen granule membrane. It localises to the secreted. The protein resides in the cell membrane. It is found in the apical cell membrane. The protein localises to the membrane raft. Its subcellular location is the endosome. In terms of biological role, functions as an intestinal M-cell transcytotic receptor specific of type-I-piliated bacteria that participates in the mucosal immune response toward these bacteria. At the apical membrane of M-cells it binds fimH, a protein of the bacteria type I pilus tip. Internalizes bound bacteria, like E.coli and S.typhimurium, from the lumen of the intestine and delivers them, through M-cells, to the underlying organized lymphoid follicles where they are captured by antigen-presenting dendritic cells to elicit a mucosal immune response. This chain is Pancreatic secretory granule membrane major glycoprotein GP2, found in Canis lupus familiaris (Dog).